Consider the following 479-residue polypeptide: NADH dehydrogenase [ubiquinone] flavoprotein 1, mitochondrial (479 aa).

103–112 lines the NADH pocket; sequence GRGGAGFPSG. An FMN-binding site is contributed by 216–264; that stretch reads RGAGAYICGEETALIESIEGKQGKPRLKPPFPAMAGLYGCPTTVTNVET. Residues C396, C399, C402, and C442 each coordinate [4Fe-4S] cluster.

It belongs to the complex I 51 kDa subunit family. In terms of assembly, complex I is composed of about 45 different subunits. This is a component of the flavoprotein-sulfur (FP) fragment of the enzyme. FMN is required as a cofactor. It depends on [4Fe-4S] cluster as a cofactor.

The protein resides in the mitochondrion inner membrane. The enzyme catalyses a ubiquinone + NADH + 5 H(+)(in) = a ubiquinol + NAD(+) + 4 H(+)(out). Core subunit of the mitochondrial membrane respiratory chain NADH dehydrogenase (Complex I) that is believed to belong to the minimal assembly required for catalysis. Complex I functions in the transfer of electrons from NADH to the respiratory chain. The immediate electron acceptor for the enzyme is believed to be ubiquinone. This Dictyostelium discoideum (Social amoeba) protein is NADH dehydrogenase [ubiquinone] flavoprotein 1, mitochondrial (ndufv1).